The chain runs to 329 residues: PDZ and LIM domain protein 1 (329 aa).

At threonine 2 the chain carries N-acetylthreonine. Residues 3–85 (TQQIDLQGPG…NLTLTVARSE (83 aa)) enclose the PDZ domain. Residues serine 90 and serine 130 each carry the phosphoserine modification. The residue at position 144 (tyrosine 144) is a Phosphotyrosine. The region spanning 258 to 317 (PMCDKCGTGIVGVFVKLRDRHRHPECYVCTDCGTNLKQKGHFFVEDQIYCEKHARERVTP) is the LIM zinc-binding domain. 8 residues coordinate Zn(2+): cysteine 260, cysteine 263, histidine 280, cysteine 283, cysteine 286, cysteine 289, cysteine 307, and histidine 310. Threonine 316 is subject to Phosphothreonine. Tyrosine 321 is subject to Phosphotyrosine.

Interacts with ACTN1, ACTN2 and ACTN4. Interacts with PDLIM4. As to expression, strongly expressed in the heart and skeletal muscle, moderately expressed in the spleen, small intestine, colon, placenta, and lung. A lower level expression is seen in liver, thymus, kidney, prostate and pancreas and is not found in the brain, testis, ovary, and peripheral blood leukocytes.

The protein resides in the cytoplasm. The protein localises to the cytoskeleton. It is found in the myofibril. Its subcellular location is the sarcomere. It localises to the z line. Its function is as follows. Cytoskeletal protein that may act as an adapter that brings other proteins (like kinases) to the cytoskeleton. Involved in assembly, disassembly and directioning of stress fibers in fibroblasts. Required for the localization of ACTN1 and PALLD to stress fibers. Required for cell migration and in maintaining cell polarity of fibroblasts. In Homo sapiens (Human), this protein is PDZ and LIM domain protein 1 (PDLIM1).